A 132-amino-acid polypeptide reads, in one-letter code: Small ribosomal subunit protein uS8 (132 aa).

The protein belongs to the universal ribosomal protein uS8 family. In terms of assembly, part of the 30S ribosomal subunit. Contacts proteins S5 and S12.

Its function is as follows. One of the primary rRNA binding proteins, it binds directly to 16S rRNA central domain where it helps coordinate assembly of the platform of the 30S subunit. This is Small ribosomal subunit protein uS8 from Bartonella tribocorum (strain CIP 105476 / IBS 506).